Consider the following 424-residue polypeptide: MLDIKRIRTDFEAVAEKLATRGVDAAVLNEMKKIDAKRRNILVKVETLKAERNTVSAEIAQAKRNKENTDDKIAAMQNLSAEVKALDAELAEIDAKLTEFTTTLPNIPADSVPVGADEDDNVEVRRWGTPREFDFEPKAHWDLGEDLGILDWERGGKVTGARFLFYKGLGARLERAIYNFMLDEHGKEGYTEVITPYIVNHDSMFGTGQYPKFKEDTFELSDTNFVLIPTAEVPLTNYYRDEILDGKDLPIYFTAMSPSFRSEAGSAGRDTRGLIRLHQFHKVEMVKFAKPEESYEELEKMTANAENILQKLNLPYRVVALSTGDMGFSAAKTYDLEVWIPAQNNYREISSCSNTEDFQARRAQIRYRDEADGKVKLLHTLNGSGLAVGRTVAAILENYQNEDGSVTIPEALRPYMGGAEVIKP.

230–232 is a binding site for L-serine; it reads TAE. Position 261-263 (261-263) interacts with ATP; sequence RSE. Glu284 contacts L-serine. An ATP-binding site is contributed by 348–351; that stretch reads EISS. Ser384 is an L-serine binding site.

The protein belongs to the class-II aminoacyl-tRNA synthetase family. Type-1 seryl-tRNA synthetase subfamily. In terms of assembly, homodimer. The tRNA molecule binds across the dimer.

The protein resides in the cytoplasm. The enzyme catalyses tRNA(Ser) + L-serine + ATP = L-seryl-tRNA(Ser) + AMP + diphosphate + H(+). It catalyses the reaction tRNA(Sec) + L-serine + ATP = L-seryl-tRNA(Sec) + AMP + diphosphate + H(+). It functions in the pathway aminoacyl-tRNA biosynthesis; selenocysteinyl-tRNA(Sec) biosynthesis; L-seryl-tRNA(Sec) from L-serine and tRNA(Sec): step 1/1. Its function is as follows. Catalyzes the attachment of serine to tRNA(Ser). Is also able to aminoacylate tRNA(Sec) with serine, to form the misacylated tRNA L-seryl-tRNA(Sec), which will be further converted into selenocysteinyl-tRNA(Sec). This Streptococcus pneumoniae (strain Hungary19A-6) protein is Serine--tRNA ligase.